A 393-amino-acid chain; its full sequence is Dual-specificity RNA methyltransferase RlmN (393 aa).

Glutamate 114 serves as the catalytic Proton acceptor. Residues 120–359 (EDDRATLCVS…VIVRKTRGDD (240 aa)) form the Radical SAM core domain. Cysteine 127 and cysteine 364 are oxidised to a cystine. The [4Fe-4S] cluster site is built by cysteine 134, cysteine 138, and cysteine 141. S-adenosyl-L-methionine-binding positions include 188-189 (GE), serine 220, 242-244 (SLH), and asparagine 321. Residue cysteine 364 is the S-methylcysteine intermediate of the active site.

This sequence belongs to the radical SAM superfamily. RlmN family. [4Fe-4S] cluster is required as a cofactor.

It localises to the cytoplasm. It carries out the reaction adenosine(2503) in 23S rRNA + 2 reduced [2Fe-2S]-[ferredoxin] + 2 S-adenosyl-L-methionine = 2-methyladenosine(2503) in 23S rRNA + 5'-deoxyadenosine + L-methionine + 2 oxidized [2Fe-2S]-[ferredoxin] + S-adenosyl-L-homocysteine. The catalysed reaction is adenosine(37) in tRNA + 2 reduced [2Fe-2S]-[ferredoxin] + 2 S-adenosyl-L-methionine = 2-methyladenosine(37) in tRNA + 5'-deoxyadenosine + L-methionine + 2 oxidized [2Fe-2S]-[ferredoxin] + S-adenosyl-L-homocysteine. In terms of biological role, specifically methylates position 2 of adenine 2503 in 23S rRNA and position 2 of adenine 37 in tRNAs. m2A2503 modification seems to play a crucial role in the proofreading step occurring at the peptidyl transferase center and thus would serve to optimize ribosomal fidelity. The sequence is that of Dual-specificity RNA methyltransferase RlmN from Actinobacillus pleuropneumoniae serotype 5b (strain L20).